Here is a 405-residue protein sequence, read N- to C-terminus: Serine/threonine-protein kinase 2 (405 aa).

Residues 54 to 405 (NDDFYHISTG…IFSDWINGGN (352 aa)) enclose the Protein kinase domain. ATP-binding positions include 60–68 (ISTGGYGIV) and Lys84. The Proton acceptor role is filled by Asp274.

This sequence belongs to the protein kinase superfamily. Ser/Thr protein kinase family. Poxviruses subfamily. Post-translationally, phosphorylated in vivo. Autophosphorylated in vitro.

Its subcellular location is the host endoplasmic reticulum. It is found in the host endoplasmic reticulum-Golgi intermediate compartment. The enzyme catalyses L-seryl-[protein] + ATP = O-phospho-L-seryl-[protein] + ADP + H(+). It catalyses the reaction L-threonyl-[protein] + ATP = O-phospho-L-threonyl-[protein] + ADP + H(+). Essential serine-protein kinase involved in the early stage of virion morphogenesis. This is Serine/threonine-protein kinase 2 (OPG054) from Vaccinia virus (strain L-IVP) (VACV).